The chain runs to 537 residues: O-phosphoserine--tRNA(Cys) ligase (537 aa).

Substrate contacts are provided by residues His-186 to Thr-188, Ser-231 to Ser-233, Tyr-273 to Tyr-274, and Asn-317.

The protein belongs to the class-II aminoacyl-tRNA synthetase family. O-phosphoseryl-tRNA(Cys) synthetase subfamily. In terms of assembly, homotetramer. Interacts with SepCysS.

The enzyme catalyses tRNA(Cys) + O-phospho-L-serine + ATP = O-phospho-L-seryl-tRNA(Cys) + AMP + diphosphate. Its function is as follows. Catalyzes the attachment of O-phosphoserine (Sep) to tRNA(Cys). The protein is O-phosphoserine--tRNA(Cys) ligase of Methanococcus vannielii (strain ATCC 35089 / DSM 1224 / JCM 13029 / OCM 148 / SB).